The chain runs to 201 residues: Molybdenum cofactor guanylyltransferase (201 aa).

GTP contacts are provided by residues 15-17 (LAG), K28, D74, and D104. Residue D104 participates in Mg(2+) binding.

This sequence belongs to the MobA family. Monomer. Mg(2+) serves as cofactor.

It localises to the cytoplasm. The enzyme catalyses Mo-molybdopterin + GTP + H(+) = Mo-molybdopterin guanine dinucleotide + diphosphate. In terms of biological role, transfers a GMP moiety from GTP to Mo-molybdopterin (Mo-MPT) cofactor (Moco or molybdenum cofactor) to form Mo-molybdopterin guanine dinucleotide (Mo-MGD) cofactor. This is Molybdenum cofactor guanylyltransferase from Pseudomonas syringae pv. tomato (strain ATCC BAA-871 / DC3000).